The chain runs to 252 residues: Protein TRANSPARENT TESTA 16 (252 aa).

Residues 1-61 (MGRGKIEIKK…GKLSEFCSEQ (61 aa)) enclose the MADS-box domain. The K-box domain maps to 86–176 (QEQLHHEMEL…YRWLHEHRAA (91 aa)). The stretch at 121 to 174 (NELDGLERQLEHSVLKVRERKNELMQQQLENLSRKRRMLEEDNNNMYRWLHEHR) forms a coiled coil.

Interacts with AP1/AGL7, SEP1/AGL2, SEP2/AGL4, SEP3/AGL9 and AGL3/SEP4. In terms of tissue distribution, expressed in buds, flowers and immature seeds, but not in roots, stems, leaves, seedlings or siliques valves. Expression in seed coat is confined to the endothelium layer.

The protein resides in the nucleus. Its function is as follows. Transcription factor involved in the developmental regulation of the endothelium and in the accumulation of proanthocyanidins (PAs) or condensed tannins which give the seed its brown pigmentation after oxidation. Necessary for the normal activation of the BANYULS promoter in the endothelium body. Is required, together with AGL11/STK for the maternal control of endothelium formation, which is essential for female gametophyte development and fertilization, and seed formation. Interacts genetically with AGL1/SHP1 and AGL5/SHP2 in a partially antagonistic manner and represses AGL1/SHP1, AGL5/SHP2, and AGL8/FUL during flower development. Is essential for the coordination of cell divisions in ovule, seed coat development and endosperm formation. Mediates the crosstalk between endothelium and nucellus to ensure proper seed formation. Functions redundantly with AGL63/GOA to repress nucellus growth and promote its degeneration. Represses the negative regulator of autophagy and programmed cell death HVA22D in the proximal nucellus. Binds specifically to the CArG box DNA sequence 5'-CC (A/T)6 GG-3'. The chain is Protein TRANSPARENT TESTA 16 (TT16) from Arabidopsis thaliana (Mouse-ear cress).